The sequence spans 191 residues: Small ribosomal subunit protein eS7 (191 aa).

Met-1 carries the N-acetylmethionine modification.

This sequence belongs to the eukaryotic ribosomal protein eS7 family.

The protein is Small ribosomal subunit protein eS7 (RPS7) of Brassica oleracea (Wild cabbage).